The primary structure comprises 335 residues: S-adenosylmethionine decarboxylase proenzyme (335 aa).

Catalysis depends on residues glutamate 12 and glutamate 15. Serine 70 functions as the Schiff-base intermediate with substrate; via pyruvic acid in the catalytic mechanism. Serine 70 is modified (pyruvic acid (Ser); by autocatalysis). The active-site Proton donor; for catalytic activity is the cysteine 84. Residues serine 231 and histidine 245 each act as proton acceptor; for processing activity in the active site.

It belongs to the eukaryotic AdoMetDC family. Pyruvate serves as cofactor. Post-translationally, is synthesized initially as an inactive proenzyme. Formation of the active enzyme involves a self-maturation process in which the active site pyruvoyl group is generated from an internal serine residue via an autocatalytic post-translational modification. Two non-identical subunits are generated from the proenzyme in this reaction, and the pyruvate is formed at the N-terminus of the alpha chain, which is derived from the carboxyl end of the proenzyme. The post-translation cleavage follows an unusual pathway, termed non-hydrolytic serinolysis, in which the side chain hydroxyl group of the serine supplies its oxygen atom to form the C-terminus of the beta chain, while the remainder of the serine residue undergoes an oxidative deamination to produce ammonia and the pyruvoyl group blocking the N-terminus of the alpha chain.

It catalyses the reaction S-adenosyl-L-methionine + H(+) = S-adenosyl 3-(methylsulfanyl)propylamine + CO2. It participates in amine and polyamine biosynthesis; S-adenosylmethioninamine biosynthesis; S-adenosylmethioninamine from S-adenosyl-L-methionine: step 1/1. Its function is as follows. Essential for biosynthesis of the polyamines spermidine and spermine. Promotes maintenance and self-renewal of embryonic stem cells, by maintaining spermine levels. This is S-adenosylmethionine decarboxylase proenzyme (amd1) from Xenopus laevis (African clawed frog).